Reading from the N-terminus, the 156-residue chain is Ribonuclease pancreatic (156 aa).

The first 28 residues, 1-28 (MALEKSLALLPLLVLVLLVLGWVQPSLG), serve as a signal peptide directing secretion. The span at 33-43 (AQKFQRQHMDS) shows a compositional bias: basic and acidic residues. The segment at 33 to 52 (AQKFQRQHMDSDGSPSSNPT) is disordered. The substrate site is built by K35 and R38. The active-site Proton acceptor is the H40. Disulfide bonds link C54-C112, C68-C123, C86-C138, and C93-C100. N62 carries an N-linked (GlcNAc...) asparagine glycan. Substrate contacts are provided by residues 69–73 (KPVNT), K94, and R113. A glycan (N-linked (GlcNAc...) asparagine) is linked at N116. The active-site Proton donor is the H147.

This sequence belongs to the pancreatic ribonuclease family. As to quaternary structure, monomer. Interacts with and forms tight 1:1 complexes with RNH1. Dimerization of two such complexes may occur. Interaction with RNH1 inhibits this protein.

The protein localises to the secreted. The enzyme catalyses an [RNA] containing cytidine + H2O = an [RNA]-3'-cytidine-3'-phosphate + a 5'-hydroxy-ribonucleotide-3'-[RNA].. It catalyses the reaction an [RNA] containing uridine + H2O = an [RNA]-3'-uridine-3'-phosphate + a 5'-hydroxy-ribonucleotide-3'-[RNA].. Its function is as follows. Endonuclease that catalyzes the cleavage of RNA on the 3' side of pyrimidine nucleotides. Acts on single-stranded and double-stranded RNA. In Saguinus oedipus (Cotton-top tamarin), this protein is Ribonuclease pancreatic (RNASE1).